The primary structure comprises 326 residues: ELAV-like protein 1-B (326 aa).

3 consecutive RRM domains span residues 20-98, 106-186, and 244-322; these read TNLI…FARP, ANLY…FAAN, and WCIF…FKTS.

Belongs to the RRM elav family. As to quaternary structure, interacts (via RRM3) with cirbp. Unable to form oligomers. Part of a ribonucleoprotein (RNP) complex, at least composed of elavl1/elrA and/or elavl2/elrB, igf2bp3/vg1RBP, ddx6/Xp54, ybx2/frgy2, lsm14b/rap55b and, in a subset of RNP complexes, stau1/staufen.

The protein resides in the cytoplasm. It localises to the cell cortex. In terms of biological role, RNA-binding protein that binds to the 3'-UTR region of mRNAs and increases their stability. Involved in embryonic stem cells (ESCs) differentiation: preferentially binds mRNAs that are not methylated by N6-methyladenosine (m6A), stabilizing them, promoting ESCs differentiation. Binds to poly-U elements and AU-rich elements (AREs) in the 3'-UTR of target mRNAs. Acts cooperatively with cribp to stabilize AU-rich sequence (ARE)-containing mRNAs. May play a role during gastrulation. Required for the vegetal localization of vg1 mRNA. The protein is ELAV-like protein 1-B (elavl1-b) of Xenopus laevis (African clawed frog).